Here is a 188-residue protein sequence, read N- to C-terminus: Mediator of RNA polymerase II transcription subunit 29 (188 aa).

Low complexity-rich tracts occupy residues 1-23 (MNPN…QSSP) and 30-43 (VQHQ…PLQQ). Residues 1–43 (MNPNMNMMPMSGPQMMQVMQSSPSGPPGPVQHQQQQPPQPLQQ) are disordered.

This sequence belongs to the Mediator complex subunit 29 family. In terms of assembly, component of the Mediator complex. Self-associates. Interacts with dsx.

It localises to the nucleus. In terms of biological role, component of the Mediator complex, a coactivator involved in the regulated transcription of nearly all RNA polymerase II-dependent genes. Mediator functions as a bridge to convey information from gene-specific regulatory proteins to the basal RNA polymerase II transcription machinery. Mediator is recruited to promoters by direct interactions with regulatory proteins and serves as a scaffold for the assembly of a functional preinitiation complex with RNA polymerase II and the general transcription factors. Required for female somatic sexual development. The sequence is that of Mediator of RNA polymerase II transcription subunit 29 (ix) from Drosophila melanogaster (Fruit fly).